Here is a 210-residue protein sequence, read N- to C-terminus: Somatotropin (210 aa).

A signal peptide spans 1 to 22 (MGQVFLLMPVLLVSCFLSHGAA). His-38 is a Zn(2+) binding site. Cys-71 and Cys-183 form a disulfide bridge. Zn(2+) is bound at residue Glu-192. Cys-200 and Cys-208 are disulfide-bonded.

This sequence belongs to the somatotropin/prolactin family.

It is found in the secreted. Growth hormone plays an important role in growth control and is involved in the regulation of several anabolic processes. Implicated as an osmoregulatory substance important for seawater adaptation. The protein is Somatotropin (gh) of Oncorhynchus masou (Cherry salmon).